The sequence spans 90 residues: Small ribosomal subunit protein uS15c (90 aa).

Belongs to the universal ribosomal protein uS15 family. As to quaternary structure, part of the 30S ribosomal subunit.

The protein localises to the plastid. Its subcellular location is the chloroplast. This is Small ribosomal subunit protein uS15c (rps15) from Secale cereale (Rye).